Consider the following 384-residue polypeptide: Shufflon-specific DNA recombinase (384 aa).

In terms of domain architecture, Core-binding (CB) spans 9–96 (MSLSRALDKY…LLSSLFNIAR (88 aa)). The region spanning 118-284 (GRDRRLTSSE…RAWQLVSKLD (167 aa)) is the Tyr recombinase domain. Active-site residues include Arg155, Lys180, His235, Arg238, and His262. The active-site O-(3'-phospho-DNA)-tyrosine intermediate is the Tyr271.

This sequence belongs to the 'phage' integrase family.

In terms of biological role, shufflon-specific DNA recombinase. This chain is Shufflon-specific DNA recombinase (rci), found in Escherichia coli.